The chain runs to 445 residues: Tyrosine--tRNA ligase, mitochondrial (445 aa).

Tyr-33 contacts L-tyrosine. Residue Asp-37 participates in ATP binding. Positions 38–47 (PTAASLHVGN) match the 'HIGH' region motif. L-tyrosine contacts are provided by Asp-77, Tyr-184, Gln-188, Asp-191, and Gln-210. A 'KMSKS' region motif is present at residues 245–249 (KLGKS). Residue Lys-248 participates in ATP binding. Residues 384 to 445 (QPFSRLLRTL…GKRTFVLDSL (62 aa)) form the S4 RNA-binding domain.

Belongs to the class-I aminoacyl-tRNA synthetase family. As to quaternary structure, homodimer.

The protein resides in the mitochondrion matrix. The catalysed reaction is tRNA(Tyr) + L-tyrosine + ATP = L-tyrosyl-tRNA(Tyr) + AMP + diphosphate + H(+). Catalyzes the attachment of tyrosine to tRNA(Tyr) in a two-step reaction: tyrosine is first activated by ATP to form Tyr-AMP and then transferred to the acceptor end of tRNA(Tyr). The sequence is that of Tyrosine--tRNA ligase, mitochondrial from Schizosaccharomyces pombe (strain 972 / ATCC 24843) (Fission yeast).